Here is a 456-residue protein sequence, read N- to C-terminus: Serine--tRNA ligase (456 aa).

Position 252 to 254 (252 to 254) interacts with L-serine; it reads TSE. Residues 283–285 and valine 299 each bind ATP; that span reads RKE. Glutamate 306 is an L-serine binding site. ATP is bound at residue 370–373; it reads ELVS. Threonine 404 is an L-serine binding site.

The protein belongs to the class-II aminoacyl-tRNA synthetase family. Type-1 seryl-tRNA synthetase subfamily. As to quaternary structure, homodimer. The tRNA molecule binds across the dimer.

Its subcellular location is the cytoplasm. The catalysed reaction is tRNA(Ser) + L-serine + ATP = L-seryl-tRNA(Ser) + AMP + diphosphate + H(+). It carries out the reaction tRNA(Sec) + L-serine + ATP = L-seryl-tRNA(Sec) + AMP + diphosphate + H(+). Its pathway is aminoacyl-tRNA biosynthesis; selenocysteinyl-tRNA(Sec) biosynthesis; L-seryl-tRNA(Sec) from L-serine and tRNA(Sec): step 1/1. Catalyzes the attachment of serine to tRNA(Ser). Is also able to aminoacylate tRNA(Sec) with serine, to form the misacylated tRNA L-seryl-tRNA(Sec), which will be further converted into selenocysteinyl-tRNA(Sec). This Korarchaeum cryptofilum (strain OPF8) protein is Serine--tRNA ligase.